We begin with the raw amino-acid sequence, 294 residues long: Sarcotoxin II-2 (294 aa).

The N-terminal stretch at 1-22 (MKSFVFFAACFAIVALNSLAHA) is a signal peptide. A propeptide spans 23 to 24 (YP) (removed by a dipeptidylpeptidase). A Pyrrolidone carboxylic acid modification is found at Q25. Residue R293 is modified to Arginine amide.

It belongs to the attacin/sarcotoxin-2 family. As to expression, synthesized by the fat body and is eventually secreted into the hemolymph.

Its subcellular location is the secreted. In terms of biological role, sarcotoxin II is an antibacterial protein which plays a role in the inflammatory response of this insect. The main effect of sarcotoxin II on E.coli may be the inhibition of cell wall synthesis, including septum formation. This chain is Sarcotoxin II-2, found in Sarcophaga peregrina (Flesh fly).